Reading from the N-terminus, the 239-residue chain is Small ribosomal subunit protein uS3 (239 aa).

One can recognise a KH type-2 domain in the interval 39–107; the sequence is IRAALMKTLK…EVLINIVEVR (69 aa). Residues 214-239 form a disordered region; it reads AQDKKMAEQDHGGGGGDRRRRDRDAA.

The protein belongs to the universal ribosomal protein uS3 family. As to quaternary structure, part of the 30S ribosomal subunit. Forms a tight complex with proteins S10 and S14.

Binds the lower part of the 30S subunit head. Binds mRNA in the 70S ribosome, positioning it for translation. The sequence is that of Small ribosomal subunit protein uS3 from Methylocella silvestris (strain DSM 15510 / CIP 108128 / LMG 27833 / NCIMB 13906 / BL2).